Reading from the N-terminus, the 71-residue chain is Gas vesicle protein A (71 aa).

The alpha helix 1 stretch occupies residues 12–22; it reads LAEVIDRILDK. The tract at residues 26–34 is beta-strand 1; sequence VDAWVRVSL. A beta turn region spans residues 35–37; it reads VGI. The segment at 38–46 is beta-strand 2; the sequence is ELLAIEARI. An alpha helix 2 region spans residues 51-70; the sequence is VETYLKYAEAVGLTQSAAVP.

Belongs to the gas vesicle GvpA family. As to quaternary structure, the gas vesicle shell is 2 nm thick and consists of a single layer of this protein. It forms helical ribs nearly perpendicular to the long axis of the vesicle.

The protein resides in the gas vesicle shell. Gas vesicles are hollow, gas filled proteinaceous nanostructures found in some microorganisms. During planktonic growth they allow positioning of the organism at a favorable depth for light or nutrient acquisition. GvpA forms the protein shell. The polypeptide is Gas vesicle protein A (Microchaete diplosiphon (Fremyella diplosiphon)).